The sequence spans 120 residues: Secreted effector PIT2 (120 aa).

Residues 1–25 form the signal peptide; that stretch reads MLFRSAFVLLIVAFASACLVQHVQA. The interval 46–59 is PID14 protease inhibitor domain; the sequence is KLNRRWWFGFTGSL.

In terms of assembly, interacts with host cysteine proteases CP1A, CP1B, XCP2 and CP2. Cleaved by host target papain-like cysteine proteases (PLCPs) to release the embedded inhibitor peptide PID14.

The protein resides in the secreted. Functionally, secreted effector required for virulence. Functions as an inhibitor of a set of apoplastic maize papain-like cysteine proteases (PLCPs) including CP1A, CP1B, XCP2 and CP2, whose activity is directly linked with salicylic-acid-associated plant defenses. Acts as a substrate mimicking molecule for apoplastic PLCPs and its processing releases the embedded inhibitor peptide PID14, which in turn blocks PLCPs to modulate host immunity. The protein is Secreted effector PIT2 of Mycosarcoma maydis (Corn smut fungus).